We begin with the raw amino-acid sequence, 557 residues long: Ribonuclease J 2 (557 aa).

Zn(2+)-binding residues include histidine 76, histidine 78, histidine 144, and glutamate 166. Residue 366–370 (HASSH) coordinates substrate.

Belongs to the metallo-beta-lactamase superfamily. RNA-metabolizing metallo-beta-lactamase-like family. Bacterial RNase J subfamily. Homodimer, may be a subunit of the RNA degradosome. Zn(2+) is required as a cofactor.

It is found in the cytoplasm. In terms of biological role, an RNase that has 5'-3' exonuclease and possibly endoonuclease activity. Involved in maturation of rRNA and in some organisms also mRNA maturation and/or decay. This Staphylococcus aureus (strain MRSA252) protein is Ribonuclease J 2.